The chain runs to 122 residues: Large ribosomal subunit protein uL14 (122 aa).

This sequence belongs to the universal ribosomal protein uL14 family. As to quaternary structure, part of the 50S ribosomal subunit. Forms a cluster with proteins L3 and L19. In the 70S ribosome, L14 and L19 interact and together make contacts with the 16S rRNA in bridges B5 and B8.

In terms of biological role, binds to 23S rRNA. Forms part of two intersubunit bridges in the 70S ribosome. The protein is Large ribosomal subunit protein uL14 of Clavibacter michiganensis subsp. michiganensis (strain NCPPB 382).